The sequence spans 439 residues: Tol-Pal system protein TolB (439 aa).

An N-terminal signal peptide occupies residues 1-24 (MRNGMRKIIAGVFIFVFLISNLYA).

Belongs to the TolB family. As to quaternary structure, the Tol-Pal system is composed of five core proteins: the inner membrane proteins TolA, TolQ and TolR, the periplasmic protein TolB and the outer membrane protein Pal. They form a network linking the inner and outer membranes and the peptidoglycan layer.

The protein resides in the periplasm. In terms of biological role, part of the Tol-Pal system, which plays a role in outer membrane invagination during cell division and is important for maintaining outer membrane integrity. This chain is Tol-Pal system protein TolB, found in Francisella tularensis subsp. tularensis (strain FSC 198).